A 265-amino-acid polypeptide reads, in one-letter code: RNA polymerase sigma factor SigI2 (265 aa).

Positions 71–84 match the Polymerase core binding motif; the sequence is DEFSVGLAAFNEAI. Positions 211-230 form a DNA-binding region, H-T-H motif; that stretch reads KTELLKLLKINKKTIERNRT.

This sequence belongs to the sigma-70 factor family. SigI subfamily. Interacts with RsgI2.

The protein resides in the cytoplasm. With respect to regulation, negatively regulated by the anti-sigma-I factor RsgI2. Binding of the polysaccharide substrate to RsgI2 may lead to the release and activation of SigI2. Sigma factors are initiation factors that promote the attachment of RNA polymerase to specific initiation sites and are then released. This sigma factor is involved in regulation of cellulosomal genes via an external polysaccharide-sensing mechanism. The protein is RNA polymerase sigma factor SigI2 of Acetivibrio thermocellus (strain ATCC 27405 / DSM 1237 / JCM 9322 / NBRC 103400 / NCIMB 10682 / NRRL B-4536 / VPI 7372) (Clostridium thermocellum).